Consider the following 532-residue polypeptide: Flavin-containing monooxygenase 1 (532 aa).

Position 2 is an N-acetylalanine (Ala2). At 2–510 (AKRVAIVGAG…ARVVQESPSP (509 aa)) the chain is on the lumenal side. FAD-binding positions include 9 to 13 (GAGVS), Glu32, 40 to 41 (LW), and 61 to 62 (NS). NADP(+)-binding positions include 60 to 61 (SN) and 195 to 198 (SGTD). Residues 511-531 (FESFLKVFSFLALLVAIFLIF) form a helical membrane-spanning segment. A topological domain (cytoplasmic) is located at residue Leu532.

It belongs to the FMO family. The cofactor is FAD. As to expression, expressed mainly in fetal and adult liver.

It localises to the endoplasmic reticulum membrane. The enzyme catalyses hypotaurine + NADPH + O2 + H(+) = taurine + NADP(+) + H2O. The catalysed reaction is hypotaurine + NADH + O2 + H(+) = taurine + NAD(+) + H2O. It catalyses the reaction trimethylamine + NADPH + O2 = trimethylamine N-oxide + NADP(+) + H2O. It carries out the reaction N,N-dimethylaniline + NADPH + O2 + H(+) = N,N-dimethylaniline N-oxide + NADP(+) + H2O. Functionally, broad spectrum monooxygenase that catalyzes the oxygenation of a wide variety of nitrogen- and sulfur-containing compounds including xenobiotics. Catalyzes the S-oxygenation of hypotaurine to produce taurine, an organic osmolyte involved in cell volume regulation as well as a variety of cytoprotective and developmental processes. In vitro, catalyzes the N-oxygenation of trimethylamine (TMA) to produce trimethylamine N-oxide (TMAO) and could therefore participate to the detoxification of this compound that is generated by the action of gut microbiota from dietary precursors such as choline, choline containing compounds, betaine or L-carnitine. The chain is Flavin-containing monooxygenase 1 from Homo sapiens (Human).